A 109-amino-acid chain; its full sequence is Nucleoid-associated protein Swoo_1794 (109 aa).

A disordered region spans residues 88 to 109; it reads QKDKMAEVTGGMQLPPGMKMPF.

It belongs to the YbaB/EbfC family. Homodimer.

It localises to the cytoplasm. Its subcellular location is the nucleoid. Its function is as follows. Binds to DNA and alters its conformation. May be involved in regulation of gene expression, nucleoid organization and DNA protection. This chain is Nucleoid-associated protein Swoo_1794, found in Shewanella woodyi (strain ATCC 51908 / MS32).